The chain runs to 252 residues: Imidazole glycerol phosphate synthase subunit HisF (252 aa).

Residues D11 and D130 contribute to the active site.

Belongs to the HisA/HisF family. As to quaternary structure, heterodimer of HisH and HisF.

It localises to the cytoplasm. The enzyme catalyses 5-[(5-phospho-1-deoxy-D-ribulos-1-ylimino)methylamino]-1-(5-phospho-beta-D-ribosyl)imidazole-4-carboxamide + L-glutamine = D-erythro-1-(imidazol-4-yl)glycerol 3-phosphate + 5-amino-1-(5-phospho-beta-D-ribosyl)imidazole-4-carboxamide + L-glutamate + H(+). It participates in amino-acid biosynthesis; L-histidine biosynthesis; L-histidine from 5-phospho-alpha-D-ribose 1-diphosphate: step 5/9. In terms of biological role, IGPS catalyzes the conversion of PRFAR and glutamine to IGP, AICAR and glutamate. The HisF subunit catalyzes the cyclization activity that produces IGP and AICAR from PRFAR using the ammonia provided by the HisH subunit. The chain is Imidazole glycerol phosphate synthase subunit HisF from Lacticaseibacillus paracasei (strain ATCC 334 / BCRC 17002 / CCUG 31169 / CIP 107868 / KCTC 3260 / NRRL B-441) (Lactobacillus paracasei).